We begin with the raw amino-acid sequence, 575 residues long: Intermediate filament protein ifd-1 (575 aa).

The head stretch occupies residues 1–56 (MSKLNPRVAHNPVLSRIIESGRTNLPSGITSAGSLSAYAQAAAVTIRDNRDREKRE). The 354-residue stretch at 53–406 (EKREIADLNN…KLMEQAENLR (354 aa)) folds into the IF rod domain. Residues 57 to 88 (IADLNNRLARYVEKVRFLEAQNRVLENDIGLF) form a coil 1A region. The linker 1 stretch occupies residues 89–102 (RQAAHIHTGKVRDY). The segment at 103-240 (YDAEKTSLAT…STHEIAIREE (138 aa)) is coil 1B. Positions 241 to 258 (INKARRDSTDKNREFFHR) are linker 12. The segment at 259–408 (ELHMSMKEIR…MEQAENLRTS (150 aa)) is coil 2. Positions 409–572 (YQSDFVIDTP…DEVGWYAHVS (164 aa)) are tail. An LTD domain is found at 459–575 (NTQQFRSYGK…GWYAHVSYSH (117 aa)).

The protein belongs to the intermediate filament family.

The protein resides in the cytoplasm. In terms of biological role, cytoplasmic intermediate filaments provide mechanical strength to cells. Not essential protein. The chain is Intermediate filament protein ifd-1 from Caenorhabditis elegans.